The following is a 735-amino-acid chain: Two pore calcium channel protein 1B (735 aa).

At 1-76 (MEEYLLPGES…ELYFMFTRFD (76 aa)) the chain is on the cytoplasmic side. Residues 77 to 97 (FLWSLNYLALVVLNFFEKPLW) traverse the membrane as a helical segment. Residues 98–125 (CSKHLAESCNNRDYYYLGELPFLTGAES) lie on the Extracellular side of the membrane. A helical transmembrane segment spans residues 126–146 (LIFEGVTLLLLIIHILFPISY). Topologically, residues 147–161 (EGFNLYWRSLLNRLK) are cytoplasmic. A helical transmembrane segment spans residues 162 to 182 (VILLLILVADIVVYILLPADF). Residue Y183 is a topological domain, extracellular. Residues 184–202 (YLPFRIAPYLRVVFFILNI) traverse the membrane as a helical; Voltage-sensor segment. The Cytoplasmic portion of the chain corresponds to 203-208 (RELRDS). Residues 209–229 (FFILAGMLGTYLNVVALSALF) traverse the membrane as a helical segment. At 230–248 (LLFSSWLAYVFFEDTRQGK) the chain is on the extracellular side. An intramembrane region (pore-forming) is located at residues 249-263 (TTFTSYGTTLYQMFV). Topologically, residues 264–286 (LFTTSNNPDVWIPAYKDSRWYCL) are extracellular. Residues 287 to 307 (FFVLYVLLGVYFVTNLILAVV) form a helical membrane-spanning segment. Over 308 to 431 (YDSFKSELVK…ASEKLRGFIR (124 aa)) the chain is Cytoplasmic. 2 EF-hand domains span residues 325 to 360 (LRLR…LNKY) and 366 to 401 (ISGD…IGLR). A helical transmembrane segment spans residues 432 to 452 (GATFEYIIVFVLLVNLVAVII). Residues 453–470 (ETTLDIQNNSGQTFWQKV) are Extracellular-facing. N-linked (GlcNAc...) asparagine glycosylation occurs at N460. The chain crosses the membrane as a helical span at residues 471 to 491 (EFTFGWLYVIEMALKVYTYGF). Residues 492-501 (ENYWRDGQNR) are Cytoplasmic-facing. A helical transmembrane segment spans residues 502–522 (FDFIVTWVIVIGETTTFVAPD). The Extracellular segment spans residues 523–531 (DLTFLSNGE). A helical; Voltage-sensor membrane pass occupies residues 532–549 (WIRYLLIARMLRLIRLLM). The Cytoplasmic portion of the chain corresponds to 550 to 560 (HVERYRAFVAT). A helical membrane pass occupies residues 561-581 (FLTLIPSLMPYLGTIFCILCF). The Extracellular portion of the chain corresponds to 582–618 (YCSLGLQIFGGIVNTGNPNLAQTDLAGNDYLLFNFND). The segment at residues 619-633 (YPNGMVTLFNILVMG) is an intramembrane region (pore-forming). Residues 634 to 654 (NWQVWMQSYKELTGTSWTYAY) lie on the Extracellular side of the membrane. A helical membrane pass occupies residues 655–675 (FVSFYLISVLWLLNLIVAFVL). The Cytoplasmic segment spans residues 676-735 (EAFQAEMDLEASARCVDGDDKEAKRERRRNVGTKTRSQRVDFLLHHMLRSELTECSNDNP).

It belongs to the calcium channel alpha-1 subunit (TC 1.A.1.11) family. Two pore calcium channel subfamily. In terms of assembly, homodimer.

It is found in the membrane. Its activity is regulated as follows. Inhibited by Al(3+), La(3+) and Gd(3+). Up-regulated by H(2)O(2), cryptogein, salicylic acid (SA) and cold shock. In terms of biological role, functions as a voltage-gated inward-rectifying Ca(2+) channel (VDCC) across the plasma membrane that mediates sucrose-induced Ca(2+) influx in autotrophically grown leaf cells. Acts as the major ROS-responsive Ca(2+) channel and is the possible target of Al-dependent inhibition. Plays a regulatory role in defense responses. In Nicotiana tabacum (Common tobacco), this protein is Two pore calcium channel protein 1B (TPC1B).